A 199-amino-acid chain; its full sequence is V-type proton ATPase subunit E (199 aa).

This sequence belongs to the V-ATPase E subunit family.

In terms of biological role, produces ATP from ADP in the presence of a proton gradient across the membrane. This chain is V-type proton ATPase subunit E, found in Clostridium botulinum (strain Loch Maree / Type A3).